A 392-amino-acid chain; its full sequence is 4-hydroxybenzoate polyprenyltransferase, mitochondrial (392 aa).

The N-terminal 22 residues, 1 to 22, are a transit peptide targeting the mitochondrion; sequence MYALRHLRLQSARHFRSSYAAA. Transmembrane regions (helical) follow at residues 90–110, 115–135, 163–183, 184–204, 207–227, 236–256, 283–303, 307–327, and 339–359; these read IGTY…ADAG, LTML…GCTI, FDAI…LVQL, NWQS…YPLM, VTYW…LLGW, LAAC…YDTI, VWLS…GWAC, VPYY…IYSL, and FISN…GTLL. The segment at 365-392 is disordered; the sequence is KKQRQSSLTTSTASSYVPALPQKPEVLS. The segment covering 369–379 has biased composition (polar residues); it reads QSSLTTSTASS.

It belongs to the UbiA prenyltransferase family. The cofactor is Mg(2+).

Its subcellular location is the mitochondrion inner membrane. The catalysed reaction is an all-trans-polyprenyl diphosphate + 4-hydroxybenzoate = a 4-hydroxy-3-(all-trans-polyprenyl)benzoate + diphosphate. It functions in the pathway cofactor biosynthesis; ubiquinone biosynthesis. In terms of biological role, catalyzes the prenylation of para-hydroxybenzoate (PHB) with an all-trans polyprenyl group. Mediates the second step in the final reaction sequence of coenzyme Q (CoQ) biosynthesis, which is the condensation of the polyisoprenoid side chain with PHB, generating the first membrane-bound Q intermediate. The polypeptide is 4-hydroxybenzoate polyprenyltransferase, mitochondrial (Drosophila melanogaster (Fruit fly)).